The primary structure comprises 100 residues: Tetrahydromethanopterin S-methyltransferase subunit B (100 aa).

A helical transmembrane segment spans residues 80-100 (KLTNIVYGFILGLIILFALLL).

The protein belongs to the MtrB family. In terms of assembly, the complex is composed of 8 subunits; MtrA, MtrB, MtrC, MtrD, MtrE, MtrF, MtrG and MtrH.

Its subcellular location is the cell membrane. It catalyses the reaction 5-methyl-5,6,7,8-tetrahydromethanopterin + coenzyme M + 2 Na(+)(in) = 5,6,7,8-tetrahydromethanopterin + methyl-coenzyme M + 2 Na(+)(out). The protein operates within one-carbon metabolism; methanogenesis from CO(2); methyl-coenzyme M from 5,10-methylene-5,6,7,8-tetrahydromethanopterin: step 2/2. In terms of biological role, part of a complex that catalyzes the formation of methyl-coenzyme M and tetrahydromethanopterin from coenzyme M and methyl-tetrahydromethanopterin. This is an energy-conserving, sodium-ion translocating step. This is Tetrahydromethanopterin S-methyltransferase subunit B from Methanothermobacter marburgensis (strain ATCC BAA-927 / DSM 2133 / JCM 14651 / NBRC 100331 / OCM 82 / Marburg) (Methanobacterium thermoautotrophicum).